Here is a 250-residue protein sequence, read N- to C-terminus: Indole-3-glycerol phosphate synthase (250 aa).

Belongs to the TrpC family.

It catalyses the reaction 1-(2-carboxyphenylamino)-1-deoxy-D-ribulose 5-phosphate + H(+) = (1S,2R)-1-C-(indol-3-yl)glycerol 3-phosphate + CO2 + H2O. It functions in the pathway amino-acid biosynthesis; L-tryptophan biosynthesis; L-tryptophan from chorismate: step 4/5. In Picrophilus torridus (strain ATCC 700027 / DSM 9790 / JCM 10055 / NBRC 100828 / KAW 2/3), this protein is Indole-3-glycerol phosphate synthase.